A 165-amino-acid polypeptide reads, in one-letter code: UPF0303 protein Bcenmc03_1534 (165 aa).

The protein belongs to the UPF0303 family.

The polypeptide is UPF0303 protein Bcenmc03_1534 (Burkholderia orbicola (strain MC0-3)).